Here is a 145-residue protein sequence, read N- to C-terminus: D-aminoacyl-tRNA deacylase (145 aa).

The Gly-cisPro motif, important for rejection of L-amino acids signature appears at Gly-137 to Pro-138.

This sequence belongs to the DTD family. In terms of assembly, homodimer.

It localises to the cytoplasm. It catalyses the reaction glycyl-tRNA(Ala) + H2O = tRNA(Ala) + glycine + H(+). It carries out the reaction a D-aminoacyl-tRNA + H2O = a tRNA + a D-alpha-amino acid + H(+). An aminoacyl-tRNA editing enzyme that deacylates mischarged D-aminoacyl-tRNAs. Also deacylates mischarged glycyl-tRNA(Ala), protecting cells against glycine mischarging by AlaRS. Acts via tRNA-based rather than protein-based catalysis; rejects L-amino acids rather than detecting D-amino acids in the active site. By recycling D-aminoacyl-tRNA to D-amino acids and free tRNA molecules, this enzyme counteracts the toxicity associated with the formation of D-aminoacyl-tRNA entities in vivo and helps enforce protein L-homochirality. This is D-aminoacyl-tRNA deacylase from Azotobacter vinelandii (strain DJ / ATCC BAA-1303).